We begin with the raw amino-acid sequence, 5125 residues long: Usherin (5125 aa).

The first 33 residues, 1-33 (MYYLALSSGFLGQAIKTSILAYLASVLLAASQG), serve as a signal peptide directing secretion. Asn-120, Asn-229, Asn-257, Asn-273, Asn-414, Asn-447, and Asn-468 each carry an N-linked (GlcNAc...) asparagine glycan. The 241-residue stretch at 273–513 (NVSLTNREIL…AVDEITIIGR (241 aa)) folds into the Laminin N-terminal domain. 39 disulfide bridges follow: Cys-514–Cys-523, Cys-516–Cys-532, Cys-534–Cys-545, Cys-548–Cys-568, Cys-571–Cys-580, Cys-573–Cys-601, Cys-604–Cys-613, Cys-616–Cys-634, Cys-637–Cys-651, Cys-639–Cys-658, Cys-660–Cys-669, Cys-672–Cys-687, Cys-690–Cys-704, Cys-692–Cys-711, Cys-713–Cys-722, Cys-725–Cys-740, Cys-743–Cys-755, Cys-745–Cys-762, Cys-764–Cys-773, Cys-776–Cys-788, Cys-791–Cys-804, Cys-793–Cys-811, Cys-813–Cys-822, Cys-825–Cys-840, Cys-843–Cys-857, Cys-845–Cys-864, Cys-866–Cys-875, Cys-878–Cys-893, Cys-896–Cys-909, Cys-898–Cys-916, Cys-918–Cys-927, Cys-930–Cys-944, Cys-947–Cys-959, Cys-949–Cys-966, Cys-981–Cys-995, Cys-998–Cys-1010, Cys-1000–Cys-1017, Cys-1019–Cys-1028, and Cys-1031–Cys-1046. 10 Laminin EGF-like domains span residues 514–570 (CQCH…NCKP), 571–636 (CQCH…VCKH), 637–689 (CDCN…CCRP), 690–742 (CDCN…GCEP), 743–790 (CHCN…ACEV), 791–842 (CDCN…LCLP), 843–895 (CNCE…GCQA), 896–946 (CDCD…GCLP), 947–997 (CLCH…RCRP), and 998–1048 (CHCH…ACSK). An N-linked (GlcNAc...) asparagine glycan is attached at Asn-646. Asn-835 and Asn-852 each carry an N-linked (GlcNAc...) asparagine glycan. The N-linked (GlcNAc...) asparagine glycan is linked to Asn-884. The N-linked (GlcNAc...) asparagine glycan is linked to Asn-940. The N-linked (GlcNAc...) asparagine glycan is linked to Asn-1007. Fibronectin type-III domains lie at 1054–1142 (PPPR…TKPE), 1146–1240 (GHLN…APPQ), 1241–1356 (RQEP…SAPV), and 1357–1461 (FMAA…AAPA). Residues Asn-1067, Asn-1149, Asn-1170, Asn-1221, Asn-1304, and Asn-1381 are each glycosylated (N-linked (GlcNAc...) asparagine). Laminin G-like domains are found at residues 1510–1697 (TKGT…WEGC) and 1702–1879 (EEGV…QDGC). Disulfide bonds link Cys-1660–Cys-1697 and Cys-1850–Cys-1879. Fibronectin type-III domains follow at residues 1857–1943 (TRGA…SAPH), 1945–2042 (VPTP…TPQE), 2043–2132 (APQE…LPPE), 2133–2230 (RVDP…TVPE), 2231–2318 (GVPA…APPE), 2319–2421 (GTVN…MPPG), 2425–2519 (GLLS…TTED), 2520–2613 (KPGP…TPEG), 2614–2709 (IPGP…TRPS), 2713–2806 (GVQP…THPA), 2807–2910 (LPQE…TLAG), 2914–3005 (RGAT…TWEE), 3009–3099 (GMRP…TPSG), 3380–3485 (ATEE…TRED), 3486–3577 (VPQG…TRGV), 3580–3670 (SVPP…AAPQ), 3672–3762 (VWVT…TPED), 3765–3852 (PPCN…TLEA), 3853–3950 (APVG…TLEA), 3951–4054 (PPQD…SAPS), 4055–4143 (GLMN…APPD), 4144–4251 (SQMA…APPD), 4252–4344 (GLSP…ASPA), 4345–4432 (GVSP…APPE), 4433–4517 (DMDP…TSPS), 4518–4620 (APSG…IPPL), 4625–4720 (PHLE…TGPA), 4721–4813 (PPEG…THPA), and 4814–4916 (PPSG…TKKE). The interval 1930–1950 (SDWSRGRTLGSAPHSVPTPSR) is disordered.

As to quaternary structure, interacts with collagen IV and fibronectin via its laminin EGF-like domains. Interaction with collagen may be required for stable integration into the basement membrane. Interacts with NINL. Interacts with USH1C. Interacts (via the cytoplasmic region) with PDZD7. Component of USH2 complex, composed of ADGRV1, PDZD7, USH2A and WHRN. Interacts with ADGRV1/MASS1 (via N-terminal PDZ domain). Interacts (via the cytoplasmic region) with WHRN. Interacts (via the cytoplasmic region) with VEZT and MYO7A (via MyTH4-FERM domains); the interaction associates VEZT with the USH2 complex at the stereocilia base. In terms of tissue distribution, present in the synaptic terminals of inner ear hair cells (at protein level). Predominantly expressed in the retina and cochlea. Weakly expressed in brain and kidney. Detectable from E17 in the neural epithelium, but not in the retinal pigment epithelium (RPE) of the developing retina. After birth, it is expressed at P7 and remains expressed during adulthood.

It localises to the secreted. The protein resides in the cell projection. Its subcellular location is the stereocilium membrane. It is found in the photoreceptor inner segment. Functionally, involved in hearing and vision as member of the USH2 complex. In the inner ear, required for the hair bundle ankle formation, which connects growing stereocilia in developing cochlear hair cells. In retina photoreceptors, the USH2 complex is required for the maintenance of periciliary membrane complex that seems to play a role in regulating intracellular protein transport. The polypeptide is Usherin (Ush2a) (Rattus norvegicus (Rat)).